The sequence spans 166 residues: Protein-export protein SecB (166 aa).

Positions 1–16 are enriched in polar residues; the sequence is MTDTSAAGNPTPGQQP. The segment at 1-21 is disordered; that stretch reads MTDTSAAGNPTPGQQPANPPS.

Belongs to the SecB family. Homotetramer, a dimer of dimers. One homotetramer interacts with 1 SecA dimer.

It localises to the cytoplasm. In terms of biological role, one of the proteins required for the normal export of preproteins out of the cell cytoplasm. It is a molecular chaperone that binds to a subset of precursor proteins, maintaining them in a translocation-competent state. It also specifically binds to its receptor SecA. The polypeptide is Protein-export protein SecB (Hyphomonas neptunium (strain ATCC 15444)).